A 138-amino-acid chain; its full sequence is Small ribosomal subunit protein bS6 (138 aa).

Positions 94–138 (VKQDGPLPTPKPTSKEDETEKEEVKPTEDKTESPAQEEKKEDSKE) are disordered. Residues 106 to 138 (TSKEDETEKEEVKPTEDKTESPAQEEKKEDSKE) are compositionally biased toward basic and acidic residues.

This sequence belongs to the bacterial ribosomal protein bS6 family.

Functionally, binds together with bS18 to 16S ribosomal RNA. In Prochlorococcus marinus (strain NATL1A), this protein is Small ribosomal subunit protein bS6.